Consider the following 712-residue polypeptide: 1,4-alpha-glucan branching enzyme GlgB (712 aa).

Residue D397 is the Nucleophile of the active site. Catalysis depends on E450, which acts as the Proton donor.

Belongs to the glycosyl hydrolase 13 family. GlgB subfamily. In terms of assembly, monomer.

The catalysed reaction is Transfers a segment of a (1-&gt;4)-alpha-D-glucan chain to a primary hydroxy group in a similar glucan chain.. It functions in the pathway glycan biosynthesis; glycogen biosynthesis. In terms of biological role, catalyzes the formation of the alpha-1,6-glucosidic linkages in glycogen by scission of a 1,4-alpha-linked oligosaccharide from growing alpha-1,4-glucan chains and the subsequent attachment of the oligosaccharide to the alpha-1,6 position. In Bradyrhizobium sp. (strain BTAi1 / ATCC BAA-1182), this protein is 1,4-alpha-glucan branching enzyme GlgB.